The primary structure comprises 256 residues: Protein FixA (256 aa).

It belongs to the ETF beta-subunit/FixA family. As to quaternary structure, heterodimer of FixA and FixB.

Its pathway is amine and polyamine metabolism; carnitine metabolism. In terms of biological role, required for anaerobic carnitine reduction. May bring reductant to CaiA. This Escherichia coli O6:H1 (strain CFT073 / ATCC 700928 / UPEC) protein is Protein FixA.